A 180-amino-acid chain; its full sequence is Inner membrane-spanning protein YciB (180 aa).

The next 6 helical transmembrane spans lie at 4–24 (LLSE…GGGI), 25–45 (QSAT…CYII), 49–69 (VSKL…ITLI), 76–96 (IKIK…MSGI), 118–138 (IILS…NEVV), and 150–170 (FKVF…LPLL).

Belongs to the YciB family.

It is found in the cell inner membrane. Plays a role in cell envelope biogenesis, maintenance of cell envelope integrity and membrane homeostasis. The chain is Inner membrane-spanning protein YciB from Rickettsia typhi (strain ATCC VR-144 / Wilmington).